The chain runs to 374 residues: Flagellar P-ring protein (374 aa).

Residues 1–29 form the signal peptide; sequence MRRVRTTRLFQVACAAIVALASSAMSAHA.

The protein belongs to the FlgI family. As to quaternary structure, the basal body constitutes a major portion of the flagellar organelle and consists of four rings (L,P,S, and M) mounted on a central rod.

Its subcellular location is the periplasm. The protein localises to the bacterial flagellum basal body. In terms of biological role, assembles around the rod to form the L-ring and probably protects the motor/basal body from shearing forces during rotation. The sequence is that of Flagellar P-ring protein from Bradyrhizobium sp. (strain BTAi1 / ATCC BAA-1182).